Here is a 232-residue protein sequence, read N- to C-terminus: 6-phosphogluconolactonase (232 aa).

The protein belongs to the glucosamine/galactosamine-6-phosphate isomerase family. 6-phosphogluconolactonase subfamily.

It carries out the reaction 6-phospho-D-glucono-1,5-lactone + H2O = 6-phospho-D-gluconate + H(+). It participates in carbohydrate degradation; pentose phosphate pathway; D-ribulose 5-phosphate from D-glucose 6-phosphate (oxidative stage): step 2/3. In terms of biological role, hydrolysis of 6-phosphogluconolactone to 6-phosphogluconate. The sequence is that of 6-phosphogluconolactonase (pgl) from Rhizobium meliloti (strain 1021) (Ensifer meliloti).